The sequence spans 231 residues: Phosphatidylserine decarboxylase proenzyme (231 aa).

The active-site Schiff-base intermediate with substrate; via pyruvic acid is Ser189. The residue at position 189 (Ser189) is a Pyruvic acid (Ser); by autocatalysis.

Belongs to the phosphatidylserine decarboxylase family. PSD-A subfamily. As to quaternary structure, heterodimer of a large membrane-associated beta subunit and a small pyruvoyl-containing alpha subunit. Pyruvate serves as cofactor. Is synthesized initially as an inactive proenzyme. Formation of the active enzyme involves a self-maturation process in which the active site pyruvoyl group is generated from an internal serine residue via an autocatalytic post-translational modification. Two non-identical subunits are generated from the proenzyme in this reaction, and the pyruvate is formed at the N-terminus of the alpha chain, which is derived from the carboxyl end of the proenzyme. The post-translation cleavage follows an unusual pathway, termed non-hydrolytic serinolysis, in which the side chain hydroxyl group of the serine supplies its oxygen atom to form the C-terminus of the beta chain, while the remainder of the serine residue undergoes an oxidative deamination to produce ammonia and the pyruvoyl prosthetic group on the alpha chain.

It is found in the cell membrane. It catalyses the reaction a 1,2-diacyl-sn-glycero-3-phospho-L-serine + H(+) = a 1,2-diacyl-sn-glycero-3-phosphoethanolamine + CO2. It participates in phospholipid metabolism; phosphatidylethanolamine biosynthesis; phosphatidylethanolamine from CDP-diacylglycerol: step 2/2. Functionally, catalyzes the formation of phosphatidylethanolamine (PtdEtn) from phosphatidylserine (PtdSer). The protein is Phosphatidylserine decarboxylase proenzyme of Chelativorans sp. (strain BNC1).